The chain runs to 431 residues: Glucose-1-phosphate adenylyltransferase (431 aa).

Lys-39 is a binding site for beta-D-fructose 1,6-bisphosphate. AMP contacts are provided by Arg-40, His-46, and Arg-52. Tyr-114 serves as a coordination point for alpha-D-glucose 1-phosphate. Arg-130 is a binding site for AMP. Alpha-D-glucose 1-phosphate-binding positions include Gly-179, 194 to 195 (EK), and Ser-212. The AMP site is built by Glu-370 and Arg-386. Residues 419–423 (REMLR) and 429–431 (QER) contribute to the beta-D-fructose 1,6-bisphosphate site.

The protein belongs to the bacterial/plant glucose-1-phosphate adenylyltransferase family. As to quaternary structure, homotetramer.

It carries out the reaction alpha-D-glucose 1-phosphate + ATP + H(+) = ADP-alpha-D-glucose + diphosphate. Its pathway is glycan biosynthesis; glycogen biosynthesis. With respect to regulation, allosterically activated by fructose-1,6-bisphosphate (F16BP) and inhibited by AMP. Its function is as follows. Involved in the biosynthesis of ADP-glucose, a building block required for the elongation reactions to produce glycogen. Catalyzes the reaction between ATP and alpha-D-glucose 1-phosphate (G1P) to produce pyrophosphate and ADP-Glc. The sequence is that of Glucose-1-phosphate adenylyltransferase from Salmonella dublin (strain CT_02021853).